Consider the following 309-residue polypeptide: NAD-dependent protein deacylase sirtuin-5, mitochondrial (309 aa).

The transit peptide at 1 to 35 (MILLPFHTRRLVSHVYCGLKPASKKKGIALEMARP) directs the protein to the mitochondrion. Positions 36-306 (SSNLADFREA…PPAIARHETE (271 aa)) constitute a Deacetylase sirtuin-type domain. 57–76 (GAGVSAESGVPTFRGAGGYW) contributes to the NAD(+) binding site. Substrate contacts are provided by Tyr101 and Arg104. 139–142 (QNID) contacts NAD(+). The active-site Proton acceptor is the His157. The Zn(2+) site is built by Cys165, Cys168, Cys206, and Cys211. NAD(+) is bound by residues 248–250 (GTS), 274–276 (NME), and Cys292.

It belongs to the sirtuin family. Class III subfamily. Requires Zn(2+) as cofactor.

It is found in the mitochondrion. The protein resides in the cytoplasm. Its subcellular location is the cytosol. It localises to the nucleus. It carries out the reaction N(6)-malonyl-L-lysyl-[protein] + NAD(+) + H2O = 2''-O-malonyl-ADP-D-ribose + nicotinamide + L-lysyl-[protein]. It catalyses the reaction N(6)-succinyl-L-lysyl-[protein] + NAD(+) + H2O = 2''-O-succinyl-ADP-D-ribose + nicotinamide + L-lysyl-[protein]. The enzyme catalyses N(6)-glutaryl-L-lysyl-[protein] + NAD(+) + H2O = 2''-O-glutaryl-ADP-D-ribose + nicotinamide + L-lysyl-[protein]. Its function is as follows. NAD-dependent lysine demalonylase, desuccinylase and deglutarylase that specifically removes malonyl, succinyl and glutaryl groups on target proteins. Has weak NAD-dependent protein deacetylase activity; however this activity may not be physiologically relevant in vivo. The sequence is that of NAD-dependent protein deacylase sirtuin-5, mitochondrial (sirt5) from Xenopus tropicalis (Western clawed frog).